Here is a 348-residue protein sequence, read N- to C-terminus: Histidinol-phosphate aminotransferase (348 aa).

Residue Lys-207 is modified to N6-(pyridoxal phosphate)lysine.

It belongs to the class-II pyridoxal-phosphate-dependent aminotransferase family. Histidinol-phosphate aminotransferase subfamily. As to quaternary structure, homodimer. It depends on pyridoxal 5'-phosphate as a cofactor.

The catalysed reaction is L-histidinol phosphate + 2-oxoglutarate = 3-(imidazol-4-yl)-2-oxopropyl phosphate + L-glutamate. It functions in the pathway amino-acid biosynthesis; L-histidine biosynthesis; L-histidine from 5-phospho-alpha-D-ribose 1-diphosphate: step 7/9. In Rippkaea orientalis (strain PCC 8801 / RF-1) (Cyanothece sp. (strain PCC 8801)), this protein is Histidinol-phosphate aminotransferase.